A 273-amino-acid polypeptide reads, in one-letter code: MEANMPKRKEPGRSLRIKVISMGNAEVGKSCIIKRYCEKRFVSKYLATIGIDYGVTKVHVRDREIKVNIFDMAGHPFFYEVRNEFYKDTQGVILVYDVGQKDSFDALDAWLAEMKQELGPHGNMENIIFVVCANKIDCTKHRCVDESEGRLWAESKGFLYFETSAQTGEGINEMFQTFYISIVDLCENGGKRPTTNSSASFTKEQADAIRRIRNSKGSWDMLGVKPGASRDEVNKACRKLAVLLHPDKCVAPGSEDAFKAVVNARTALLKNIK.

Residues 1-18 are required for interaction with MAPK1; that stretch reads MEANMPKRKEPGRSLRIK. GTP contacts are provided by residues 23 to 30, 71 to 75, and 134 to 137; these read GNAEVGKS, DMAGH, and NKID. Residues 217-273 enclose the J domain; it reads GSWDMLGVKPGASRDEVNKACRKLAVLLHPDKCVAPGSEDAFKAVVNARTALLKNIK.

It belongs to the small GTPase superfamily. Rab family. As to quaternary structure, interacts directly with MAPK1 (wild-type and kinase-deficient forms). Interacts directly (in GTP-bound form) with MAP2K1 (wild-type and kinase-deficient forms).

Its subcellular location is the nucleus. Its function is as follows. GTPase which can activate the MEK/ERK pathway and induce cell transformation when overexpressed. May act as a nuclear scaffold for MAPK1, probably by association with MAPK1 nuclear export signal leading to enhanced ERK1/ERK2 signaling. This Pongo abelii (Sumatran orangutan) protein is DnaJ homolog subfamily C member 27 (DNAJC27).